We begin with the raw amino-acid sequence, 526 residues long: Zinc finger protein 69 homolog (526 aa).

Positions 1–39 constitute an SCAN box domain; the sequence is MPQQLLITLPTEASTWVKLQHPKKAVEGAPLWEDVTKMF. The KRAB domain occupies 76–147; sequence LTFKDISIDF…EKEGPGDPSS (72 aa). 9 C2H2-type zinc fingers span residues 271-293, 299-321, 327-349, 355-377, 383-405, 411-433, 439-461, 467-489, and 495-517; these read YECN…MRIH, FRCK…QRIH, FECE…HRTH, YVCD…LRTH, FTCN…IRIH, YACT…QRIH, YKCK…KTVH, YECN…QRHH, and YECN…HEIH.

It belongs to the krueppel C2H2-type zinc-finger protein family. In terms of tissue distribution, expressed in visceral and subcutaneous adipose tissue.

It localises to the nucleus. Functionally, putative transcription factor that appears to regulate lipid metabolism. The polypeptide is Zinc finger protein 69 homolog (ZFP69) (Homo sapiens (Human)).